Consider the following 330-residue polypeptide: Phosphatidylglycerol--prolipoprotein diacylglyceryl transferase (330 aa).

3 consecutive transmembrane segments (helical) span residues Leu-22 to Gly-42, Tyr-57 to Ala-77, and Ile-97 to Leu-117. Position 145 (Arg-145) interacts with a 1,2-diacyl-sn-glycero-3-phospho-(1'-sn-glycerol). A run of 2 helical transmembrane segments spans residues Val-193 to Ile-213 and Ile-257 to Pro-277.

It belongs to the Lgt family.

The protein localises to the cell membrane. It carries out the reaction L-cysteinyl-[prolipoprotein] + a 1,2-diacyl-sn-glycero-3-phospho-(1'-sn-glycerol) = an S-1,2-diacyl-sn-glyceryl-L-cysteinyl-[prolipoprotein] + sn-glycerol 1-phosphate + H(+). The protein operates within protein modification; lipoprotein biosynthesis (diacylglyceryl transfer). Catalyzes the transfer of the diacylglyceryl group from phosphatidylglycerol to the sulfhydryl group of the N-terminal cysteine of a prolipoprotein, the first step in the formation of mature lipoproteins. The protein is Phosphatidylglycerol--prolipoprotein diacylglyceryl transferase of Mycobacterium leprae (strain Br4923).